The primary structure comprises 170 residues: Phosphopantetheine adenylyltransferase (170 aa).

T10 contributes to the substrate binding site. ATP-binding positions include 10-11 and H18; that span reads TF. Residues K42, L75, and R89 each coordinate substrate. Residues 90-92, E100, and 125-131 contribute to the ATP site; these read GVR and YTYVASS.

Belongs to the bacterial CoaD family. In terms of assembly, homohexamer. Mg(2+) is required as a cofactor.

The protein resides in the cytoplasm. The catalysed reaction is (R)-4'-phosphopantetheine + ATP + H(+) = 3'-dephospho-CoA + diphosphate. The protein operates within cofactor biosynthesis; coenzyme A biosynthesis; CoA from (R)-pantothenate: step 4/5. Its function is as follows. Reversibly transfers an adenylyl group from ATP to 4'-phosphopantetheine, yielding dephospho-CoA (dPCoA) and pyrophosphate. The chain is Phosphopantetheine adenylyltransferase from Chlorobium limicola (strain DSM 245 / NBRC 103803 / 6330).